Here is a 315-residue protein sequence, read N- to C-terminus: Secreted frizzled-related protein 5 (315 aa).

The signal sequence occupies residues 1-27 (MRAAAGGARAAVLALLLGALHGAPARG). Residues 46-163 (SKPPQCLDIP…PLDNDLCIAV (118 aa)) form the FZ domain. Cystine bridges form between Cys51-Cys114, Cys61-Cys107, Cys98-Cys133, Cys122-Cys160, Cys126-Cys150, Cys179-Cys251, Cys182-Cys253, and Cys196-Cys301. The 123-residue stretch at 179-301 (CAQCEMEHSA…AVKFMFSYPC (123 aa)) folds into the NTR domain.

It belongs to the secreted frizzled-related protein (sFRP) family. In terms of tissue distribution, strongly expressed in the retinal pigment epithelium (RPE). Weak expression in retina, brain, heart, liver, kidney, testis and muscle.

The protein resides in the secreted. In terms of biological role, soluble frizzled-related proteins (sFRPS) function as modulators of Wnt signaling through direct interaction with Wnts. They have a role in regulating cell growth and differentiation in specific cell types. SFRP5 may be involved in determining the polarity of photoreceptor, and perhaps other, cells in the retina. Inhibits Wnt8 signaling, in vitro. The polypeptide is Secreted frizzled-related protein 5 (SFRP5) (Bos taurus (Bovine)).